We begin with the raw amino-acid sequence, 185 residues long: Inner membrane-spanning protein YciB (185 aa).

The next 5 membrane-spanning stretches (helical) occupy residues 19-39, 49-69, 72-92, 122-142, and 150-170; these read IHGI…LMAW, TMTW…LYFH, TFIK…LLFT, GYWI…AYAF, and FKLF…AVVI.

It belongs to the YciB family.

Its subcellular location is the cell inner membrane. Plays a role in cell envelope biogenesis, maintenance of cell envelope integrity and membrane homeostasis. In Acidithiobacillus ferrooxidans (strain ATCC 23270 / DSM 14882 / CIP 104768 / NCIMB 8455) (Ferrobacillus ferrooxidans (strain ATCC 23270)), this protein is Inner membrane-spanning protein YciB.